The primary structure comprises 277 residues: Undecaprenyl-diphosphatase (277 aa).

Transmembrane regions (helical) follow at residues 1 to 21 (MTWIEAIILGLVQGLTEFLPI), 41 to 61 (GAAFTAITQLGTELAVLIYFW), 90 to 110 (WLIIVGSIPIAVLGLLLEDWI), 114 to 134 (FRSLWITATMLIVFGVLLALA), 191 to 211 (AFLLAVPAVFASGLYKLYTSL), 224 to 244 (ETLVATAVAFVVAYAVIAWLM), and 255 to 275 (FVWYRILLGGVLFALLGAGVI).

This sequence belongs to the UppP family.

The protein resides in the cell membrane. It catalyses the reaction di-trans,octa-cis-undecaprenyl diphosphate + H2O = di-trans,octa-cis-undecaprenyl phosphate + phosphate + H(+). Catalyzes the dephosphorylation of undecaprenyl diphosphate (UPP). Confers resistance to bacitracin. In Micrococcus luteus (strain ATCC 4698 / DSM 20030 / JCM 1464 / CCM 169 / CCUG 5858 / IAM 1056 / NBRC 3333 / NCIMB 9278 / NCTC 2665 / VKM Ac-2230) (Micrococcus lysodeikticus), this protein is Undecaprenyl-diphosphatase.